The sequence spans 369 residues: Glutamate 5-kinase (369 aa).

K9 serves as a coordination point for ATP. Substrate is bound by residues S49, D136, and N148. Residues 168-169 and 210-216 each bind ATP; these read TD and TGGMLTK. In terms of domain architecture, PUA spans 275–355; the sequence is QGEIYVDQGA…KGVVIHRDDW (81 aa).

It belongs to the glutamate 5-kinase family.

It is found in the cytoplasm. The catalysed reaction is L-glutamate + ATP = L-glutamyl 5-phosphate + ADP. It participates in amino-acid biosynthesis; L-proline biosynthesis; L-glutamate 5-semialdehyde from L-glutamate: step 1/2. Its function is as follows. Catalyzes the transfer of a phosphate group to glutamate to form L-glutamate 5-phosphate. This chain is Glutamate 5-kinase, found in Streptococcus sanguinis (strain SK36).